Consider the following 80-residue polypeptide: Exodeoxyribonuclease 7 small subunit (80 aa).

It belongs to the XseB family. In terms of assembly, heterooligomer composed of large and small subunits.

The protein resides in the cytoplasm. It catalyses the reaction Exonucleolytic cleavage in either 5'- to 3'- or 3'- to 5'-direction to yield nucleoside 5'-phosphates.. Its function is as follows. Bidirectionally degrades single-stranded DNA into large acid-insoluble oligonucleotides, which are then degraded further into small acid-soluble oligonucleotides. The protein is Exodeoxyribonuclease 7 small subunit of Rickettsia africae (strain ESF-5).